Reading from the N-terminus, the 184-residue chain is Protein GrpE (184 aa).

Residues 1 to 35 (MTQENQNPPPEQEDVAADPQVNEAAASEPAAVKTP) are disordered.

This sequence belongs to the GrpE family. Homodimer.

Its subcellular location is the cytoplasm. Its function is as follows. Participates actively in the response to hyperosmotic and heat shock by preventing the aggregation of stress-denatured proteins, in association with DnaK and GrpE. It is the nucleotide exchange factor for DnaK and may function as a thermosensor. Unfolded proteins bind initially to DnaJ; upon interaction with the DnaJ-bound protein, DnaK hydrolyzes its bound ATP, resulting in the formation of a stable complex. GrpE releases ADP from DnaK; ATP binding to DnaK triggers the release of the substrate protein, thus completing the reaction cycle. Several rounds of ATP-dependent interactions between DnaJ, DnaK and GrpE are required for fully efficient folding. This is Protein GrpE from Polynucleobacter asymbioticus (strain DSM 18221 / CIP 109841 / QLW-P1DMWA-1) (Polynucleobacter necessarius subsp. asymbioticus).